The primary structure comprises 361 residues: Collagenase (361 aa).

This sequence belongs to the peptidase U32 family. As to quaternary structure, homodimer. A metal cation serves as cofactor.

Its activity is regulated as follows. Activity somewhat enhanced by calcium ions, inhibited by zinc and Fe(3+) ions and by p-chloromercuribenzoic acid and EDTA. Activity is enhanced by salivary peptide cystatin and reduced by salivary peptide histatin. Has collagenase activity. Active on soluble collagen, reconstituted type I collagen, heat denatured type I collagen and azocoll, but not gelatin or the synthetic bacterial collagenase substrate PZ-PLGPA. May play a role in virulence. The sequence is that of Collagenase from Porphyromonas gingivalis (Bacteroides gingivalis).